Consider the following 156-residue polypeptide: Cellulose synthase operon protein D (156 aa).

Its pathway is glycan metabolism; bacterial cellulose biosynthesis. In terms of biological role, may have a major role in the perfection of crystallization, involved either in the pore structure itself or in the organization of the pores within the linear array of terminal synthesizing complexes (TCs). The sequence is that of Cellulose synthase operon protein D from Komagataeibacter sucrofermentans (strain ATCC 700178 / DSM 15973 / CECT 7291 / JCM 9730 / LMG 18788 / BPR 2001) (Acetobacter xylinus subsp. sucrofermentans).